Consider the following 252-residue polypeptide: uncharacterized protein (252 aa).

It is found in the plastid. The protein localises to the chloroplast. This is an uncharacterized protein from Guillardia theta (Cryptophyte).